A 184-amino-acid chain; its full sequence is Ribosome-recycling factor (184 aa).

The protein belongs to the RRF family.

It is found in the cytoplasm. In terms of biological role, responsible for the release of ribosomes from messenger RNA at the termination of protein biosynthesis. May increase the efficiency of translation by recycling ribosomes from one round of translation to another. The sequence is that of Ribosome-recycling factor from Acinetobacter baumannii (strain AB307-0294).